Consider the following 502-residue polypeptide: Probable cytosol aminopeptidase (502 aa).

Positions 269 and 274 each coordinate Mn(2+). The active site involves lysine 281. 3 residues coordinate Mn(2+): aspartate 292, aspartate 351, and glutamate 353. The active site involves arginine 355.

The protein belongs to the peptidase M17 family. It depends on Mn(2+) as a cofactor.

Its subcellular location is the cytoplasm. It catalyses the reaction Release of an N-terminal amino acid, Xaa-|-Yaa-, in which Xaa is preferably Leu, but may be other amino acids including Pro although not Arg or Lys, and Yaa may be Pro. Amino acid amides and methyl esters are also readily hydrolyzed, but rates on arylamides are exceedingly low.. The catalysed reaction is Release of an N-terminal amino acid, preferentially leucine, but not glutamic or aspartic acids.. Presumably involved in the processing and regular turnover of intracellular proteins. Catalyzes the removal of unsubstituted N-terminal amino acids from various peptides. In Shewanella frigidimarina (strain NCIMB 400), this protein is Probable cytosol aminopeptidase.